The sequence spans 481 residues: MADKITARNEDYSQWYIDLVRSAKLADYSDVRGCMVIRPNGYAIWEKMQAALDRMFKETGHVNAYFPLFIPESFIAKEAEHIEGFAPECAVVTHGGGEELAEKLYVRPTSETIIWSSYKKWIQSYRDLPILINQWANVVRWEMRTRLFLRTTEFLWQEGHTAHATPEESQEEVMRMINVYRTFAEEYMAMPVIMGRKTDSEKFAGAEETYCIEAMMQDGKALQAGTSHNLGQNFAKAFDCQFQTKDSRLDYVWATSWGVSTRLIGALIMAHSDDRGLVLPPKLASRQVVIIPILRGDKAAVLEQADAMAASLKAAGIPAFVDGSEQNSPGWKFAEYELQGIPVRIEVGPRDIEKGICIAARRDTLEKSELQLGETLPGAVQEILDAMQKDMYQKALLFREENTVEASSYEEFKAAVEKGFVIAHWDGTAETEEKIKEETKATIRVLPEEDGYIERYRMNEPGTCIYSGKPAAQKVVFAKAY.

The protein belongs to the class-II aminoacyl-tRNA synthetase family. ProS type 3 subfamily. In terms of assembly, homodimer.

Its subcellular location is the cytoplasm. It catalyses the reaction tRNA(Pro) + L-proline + ATP = L-prolyl-tRNA(Pro) + AMP + diphosphate. Functionally, catalyzes the attachment of proline to tRNA(Pro) in a two-step reaction: proline is first activated by ATP to form Pro-AMP and then transferred to the acceptor end of tRNA(Pro). In Chlorobium luteolum (strain DSM 273 / BCRC 81028 / 2530) (Pelodictyon luteolum), this protein is Proline--tRNA ligase.